A 317-amino-acid polypeptide reads, in one-letter code: Aspartate carbamoyltransferase catalytic subunit (317 aa).

The carbamoyl phosphate site is built by Arg64 and Thr65. Lys92 is an L-aspartate binding site. Carbamoyl phosphate contacts are provided by Arg114, His142, and Gln145. 2 residues coordinate L-aspartate: Arg176 and Arg230. Carbamoyl phosphate contacts are provided by Gly271 and Pro272.

The protein belongs to the aspartate/ornithine carbamoyltransferase superfamily. ATCase family. In terms of assembly, heterododecamer (2C3:3R2) of six catalytic PyrB chains organized as two trimers (C3), and six regulatory PyrI chains organized as three dimers (R2).

It catalyses the reaction carbamoyl phosphate + L-aspartate = N-carbamoyl-L-aspartate + phosphate + H(+). It functions in the pathway pyrimidine metabolism; UMP biosynthesis via de novo pathway; (S)-dihydroorotate from bicarbonate: step 2/3. In terms of biological role, catalyzes the condensation of carbamoyl phosphate and aspartate to form carbamoyl aspartate and inorganic phosphate, the committed step in the de novo pyrimidine nucleotide biosynthesis pathway. This chain is Aspartate carbamoyltransferase catalytic subunit, found in Nitratidesulfovibrio vulgaris (strain ATCC 29579 / DSM 644 / CCUG 34227 / NCIMB 8303 / VKM B-1760 / Hildenborough) (Desulfovibrio vulgaris).